The sequence spans 331 residues: Gamma-parvin (331 aa).

Met-1 carries the N-acetylmethionine modification. Residues Glu-17–Lys-39 are disordered. Calponin-homology (CH) domains lie at Glu-44–Gln-151 and Asn-210–Thr-317.

Belongs to the parvin family. As to quaternary structure, interacts with ILK; the interaction promotes the establishment of cell polarity required for leukocyte migration. Interacts with ARHGEF6; the guanine nucleotide exchange factor activity of ARHGEF6 is essential for the PARVG-induced enhancement of cell spreading. Expressed predominantly in lymphoid organs, including spleen, thymus, lymph node, bone marrow and peripheral blood leukocytes and moderately in the digestive tract, including stomach, duodenum, jejunum, ileum, ileocecum and appendix, as well as in lung and liver. Also expressed in tumors, but at a lower level than in the corresponding normal tissues.

Its subcellular location is the cell junction. The protein localises to the focal adhesion. It is found in the cell membrane. The protein resides in the cytoplasm. It localises to the cytoskeleton. Its function is as follows. Plays a role with ILK in promoting the cell adhesion and spreading of leukocytes. This is Gamma-parvin (PARVG) from Homo sapiens (Human).